The following is a 452-amino-acid chain: Neuromedin-K receptor (452 aa).

Topologically, residues Met1–Arg71 are extracellular. Residues Asn9, Asn23, Asn40, and Asn60 are each glycosylated (N-linked (GlcNAc...) asparagine). The chain crosses the membrane as a helical span at residues Ile72–Ile94. Residues Trp95 to Arg104 are Cytoplasmic-facing. Residues Thr105–Thr126 form a helical membrane-spanning segment. Residues Leu127–Arg146 are Extracellular-facing. A disulfide bridge links Cys145 with Cys220. The helical transmembrane segment at Phe147–Val168 threads the bilayer. At Asp169–Lys188 the chain is on the cytoplasmic side. A helical transmembrane segment spans residues Ile189–Ser209. Residues Lys210–Phe232 lie on the Extracellular side of the membrane. A helical membrane pass occupies residues Thr233 to Val257. Residues Gly258–Lys286 are Cytoplasmic-facing. Residues Met287–Leu308 form a helical membrane-spanning segment. The Extracellular segment spans residues Thr309 to Ile321. Residues Gln322 to Leu346 traverse the membrane as a helical segment. At Asn347–Ser452 the chain is on the cytoplasmic side. Residue Cys361 is the site of S-palmitoyl cysteine attachment. Residues Phe400–Ser452 form a disordered region. Residues Lys432 to Ser452 are compositionally biased toward low complexity.

It belongs to the G-protein coupled receptor 1 family. Post-translationally, the anchoring of this receptor to the plasma membrane is probably mediated by the palmitoylation of a cysteine residue.

The protein resides in the cell membrane. This is a receptor for the tachykinin neuropeptide neuromedin-K (neurokinin B). It is associated with G proteins that activate a phosphatidylinositol-calcium second messenger system. The rank order of affinity of this receptor to tachykinins is: neuromedin-K &gt; substance K &gt; substance P. This Rattus norvegicus (Rat) protein is Neuromedin-K receptor (Tacr3).